Consider the following 434-residue polypeptide: UDP-N-acetylglucosamine 1-carboxyvinyltransferase (434 aa).

22-23 (KN) is a phosphoenolpyruvate binding site. Arg97 serves as a coordination point for UDP-N-acetyl-alpha-D-glucosamine. Catalysis depends on Asp121, which acts as the Proton donor. Positions 319 and 341 each coordinate UDP-N-acetyl-alpha-D-glucosamine.

It belongs to the EPSP synthase family. MurA subfamily.

The protein localises to the cytoplasm. The catalysed reaction is phosphoenolpyruvate + UDP-N-acetyl-alpha-D-glucosamine = UDP-N-acetyl-3-O-(1-carboxyvinyl)-alpha-D-glucosamine + phosphate. It participates in cell wall biogenesis; peptidoglycan biosynthesis. In terms of biological role, cell wall formation. Adds enolpyruvyl to UDP-N-acetylglucosamine. This Bacteroides fragilis (strain ATCC 25285 / DSM 2151 / CCUG 4856 / JCM 11019 / LMG 10263 / NCTC 9343 / Onslow / VPI 2553 / EN-2) protein is UDP-N-acetylglucosamine 1-carboxyvinyltransferase.